The primary structure comprises 198 residues: Cytochrome c oxidase subunit 2 (198 aa).

A helical membrane pass occupies residues 1 to 13 (AICSLVLYLLTLM). At 14-26 (LMEKLSSNTVDAQ) the chain is on the mitochondrial matrix side. A helical transmembrane segment spans residues 27-54 (EVELIWTILPAIVLILLALPSLQILYMM). Residues 55 to 198 (DEIDEPDLTL…WSSLLSTSSL (144 aa)) lie on the Mitochondrial intermembrane side of the membrane. Cu cation-binding residues include His-128, Cys-163, Glu-165, Cys-167, His-171, and Met-174. Glu-165 is a Mg(2+) binding site.

It belongs to the cytochrome c oxidase subunit 2 family. In terms of assembly, component of the cytochrome c oxidase (complex IV, CIV), a multisubunit enzyme composed of 14 subunits. The complex is composed of a catalytic core of 3 subunits MT-CO1, MT-CO2 and MT-CO3, encoded in the mitochondrial DNA, and 11 supernumerary subunits COX4I, COX5A, COX5B, COX6A, COX6B, COX6C, COX7A, COX7B, COX7C, COX8 and NDUFA4, which are encoded in the nuclear genome. The complex exists as a monomer or a dimer and forms supercomplexes (SCs) in the inner mitochondrial membrane with NADH-ubiquinone oxidoreductase (complex I, CI) and ubiquinol-cytochrome c oxidoreductase (cytochrome b-c1 complex, complex III, CIII), resulting in different assemblies (supercomplex SCI(1)III(2)IV(1) and megacomplex MCI(2)III(2)IV(2)). Found in a complex with TMEM177, COA6, COX18, COX20, SCO1 and SCO2. Interacts with TMEM177 in a COX20-dependent manner. Interacts with COX20. Interacts with COX16. Cu cation is required as a cofactor.

Its subcellular location is the mitochondrion inner membrane. It carries out the reaction 4 Fe(II)-[cytochrome c] + O2 + 8 H(+)(in) = 4 Fe(III)-[cytochrome c] + 2 H2O + 4 H(+)(out). In terms of biological role, component of the cytochrome c oxidase, the last enzyme in the mitochondrial electron transport chain which drives oxidative phosphorylation. The respiratory chain contains 3 multisubunit complexes succinate dehydrogenase (complex II, CII), ubiquinol-cytochrome c oxidoreductase (cytochrome b-c1 complex, complex III, CIII) and cytochrome c oxidase (complex IV, CIV), that cooperate to transfer electrons derived from NADH and succinate to molecular oxygen, creating an electrochemical gradient over the inner membrane that drives transmembrane transport and the ATP synthase. Cytochrome c oxidase is the component of the respiratory chain that catalyzes the reduction of oxygen to water. Electrons originating from reduced cytochrome c in the intermembrane space (IMS) are transferred via the dinuclear copper A center (CU(A)) of subunit 2 and heme A of subunit 1 to the active site in subunit 1, a binuclear center (BNC) formed by heme A3 and copper B (CU(B)). The BNC reduces molecular oxygen to 2 water molecules using 4 electrons from cytochrome c in the IMS and 4 protons from the mitochondrial matrix. This is Cytochrome c oxidase subunit 2 (MT-CO2) from Tinamus major (Great tinamou).